The sequence spans 675 residues: Protein PALS1 (675 aa).

Residues 1 to 78 are disordered; sequence MTTSHMNGHV…RREEEGKKQE (78 aa). The tract at residues 1–345 is required for the correct localization of PALS1 and PATJ at cell-cell contacts and the normal formation of tight junctions and adherens junctions; that stretch reads MTTSHMNGHV…QQIKPPPAKE (345 aa). Basic and acidic residues-rich tracts occupy residues 10-36 and 54-78; these read VTEE…REMA and AQLE…KKQE. Residues serine 14 and serine 25 each carry the phosphoserine modification. Positions 21–140 are interaction with PARD6B; it reads VDLASPEEHQ…LKHIQHTLVD (120 aa). Phosphoserine is present on residues serine 83 and serine 84. L27 domains follow at residues 120–177 and 179–235; these read KILE…NKAS and PFPL…MQLE. The interval 181–243 is interaction with LIN7C; it reads PLISNAQDLA…LEPFTDERVY (63 aa). Residues 256 to 336 enclose the PDZ domain; the sequence is IVRIEKARDI…TLTFVLIPSQ (81 aa). The SH3 domain occupies 345–417; it reads ETVIHVKAHF…PGKSFQQQRE (73 aa). The region spanning 479–660 is the Guanylate kinase-like domain; sequence KRPIILIGPQ…AYQELLRLIN (182 aa). 486 to 493 contributes to the ATP binding site; sequence GPQNCGQN.

It belongs to the MAGUK family. Heterodimer with MPP1. Forms a heterotrimeric complex composed of PALS1, LIN7B and PATJ; the N-terminal L27 domain of PALS1 interacts with the L27 domain of PATJ and the C-terminal L27 domain of PALS1 interacts with the L27 domain of LIN7B. Component of a complex composed of PALS1, CRB1 and MPP4. Component of a complex whose core is composed of ARHGAP17, AMOT, PALS1, PATJ and PARD3/PAR3. Component of a complex composed of PALS1, CRB1 and EPB41L5. Within the complex, interacts (via HOOK domain) with EPB41L5 (via FERM domain), and interacts with CRB1 (via intracellular domain). Component of a complex composed of PALS1, MPP3 and CRB1; PALS1 acts as a bridging protein between MPP3 (via guanylate kinase-like domain) and CRB1. Component of a complex composed of CRB3, PALS1 and PATJ. As part of the Crumbs complex; interacts with WWP1, the interaction is enhanced by AMOTL2 and facilitates WWP1 localization to the plasma membrane. The Crumbs complex promotes monoubiquitination of AMOTL2 by WWP1, which activates the Hippo signaling pathway. Interacts (via PDZ domain) with PATJ (via N-terminus). Interacts with EZR. Interacts (via PDZ domain) with CRB1 (via C-terminal ERLI motif). While the PDZ domain is sufficient for interaction with CRB1, the adjacent SH3 and guanylate kinase-like domains are likely to contribute to a high affinity interaction. Interacts with WWTR1/TAZ (via WW domain). Interacts with MPP7. Interacts (via PDZ domain) with CRB3 (via C-terminus). Interacts with LIN7C. Interacts with MPDZ. Interacts with PARD6B. Interacts with SC6A1. Interacts with CDH5; the interaction promotes PALS1 localization to cell junctions and is required for CDH5-mediated vascular lumen formation and endothelial cell. Interacts with NPHP1 (via coiled coil and SH3 domains). Interacts with NPHP4. Interacts with CRB2.

The protein localises to the golgi apparatus. It is found in the cell membrane. The protein resides in the endomembrane system. Its subcellular location is the cell junction. It localises to the tight junction. The protein localises to the adherens junction. It is found in the cell projection. The protein resides in the axon. Its subcellular location is the perikaryon. It localises to the apical cell membrane. Functionally, plays a role in tight junction biogenesis and in the establishment of cell polarity in epithelial cells. Also involved in adherens junction biogenesis by ensuring correct localization of the exocyst complex protein EXOC4/SEC8 which allows trafficking of adherens junction structural component CDH1 to the cell surface. Plays a role through its interaction with CDH5 in vascular lumen formation and endothelial membrane polarity. Required during embryonic and postnatal retinal development. Required for the maintenance of cerebellar progenitor cells in an undifferentiated proliferative state, preventing premature differentiation, and is required for cerebellar histogenesis, fissure formation, cerebellar layer organization and cortical development. Plays a role in neuronal progenitor cell survival, potentially via promotion of mTOR signaling. Plays a role in the radial and longitudinal extension of the myelin sheath in Schwann cells. May modulate SC6A1/GAT1-mediated GABA uptake by stabilizing the transporter. May play a role in the T-cell receptor-mediated activation of NF-kappa-B. Required for localization of EZR to the apical membrane of parietal cells and may play a role in the dynamic remodeling of the apical cytoskeleton. Required for the normal polarized localization of the vesicular marker STX4. Required for the correct trafficking of the myelin proteins PMP22 and MAG. Involved in promoting phosphorylation and cytoplasmic retention of transcriptional coactivators YAP1 and WWTR1/TAZ which leads to suppression of TGFB1-dependent transcription of target genes such as CCN2/CTGF, SERPINE1/PAI1, SNAI1/SNAIL1 and SMAD7. This chain is Protein PALS1, found in Canis lupus familiaris (Dog).